A 125-amino-acid chain; its full sequence is Scinderin (125 aa).

At Y13 the chain carries Phosphotyrosine. A 1,2-diacyl-sn-glycero-3-phospho-(1D-myo-inositol-4,5-bisphosphate) is bound by residues 23–30 (KGGLKYKA) and 49–57 (RLLHVKGRR). The stretch at 59-99 (VRATEVPLSWDSFNKGDCFIIDLGSEIYQWFGSSCNKYERL) is one Gelsolin-like 1 repeat.

This sequence belongs to the villin/gelsolin family.

It localises to the cytoplasm. The protein localises to the cytoskeleton. Its subcellular location is the cell projection. The protein resides in the podosome. In terms of biological role, ca(2+)-dependent actin filament-severing protein that has a regulatory function in exocytosis by affecting the organization of the microfilament network underneath the plasma membrane. In vitro, also has barbed end capping and nucleating activities in the presence of Ca(2+). Severing activity is inhibited by phosphatidylinositol 4,5-bis-phosphate (PIP2). Required for megakaryocyte differentiation, maturation, polyploidization and apoptosis with the release of platelet-like particles. Plays a role in osteoclastogenesis (OCG) and actin cytoskeletal organization in osteoclasts. Regulates chondrocyte proliferation and differentiation. Inhibits cell proliferation and tumorigenesis. Signaling is mediated by MAPK, p38 and JNK pathways. This Sus scrofa (Pig) protein is Scinderin (SCIN).